The following is a 182-amino-acid chain: Keratin, ultra high-sulfur matrix protein (182 aa).

It belongs to the KRTAP type 5 family. Cuticle layers of differentiating wool follicles.

Functionally, the keratin products of mammalian epidermal derivatives such as wool and hair consist of microfibrils embedded in a rigid matrix of other proteins. The matrix proteins include the high-sulfur and high-tyrosine keratins, having molecular weights of 6-20 kDa, whereas the microfibrils contain the larger, low-sulfur keratins (40-56 kDa). This is Keratin, ultra high-sulfur matrix protein from Ovis aries (Sheep).